The following is a 361-amino-acid chain: Chorismate synthase (361 aa).

NADP(+)-binding residues include Arg-48 and Arg-54. FMN-binding positions include 131-133, 243-244, Gly-287, 302-306, and Arg-328; these read RSS, NA, and KPTSS.

This sequence belongs to the chorismate synthase family. Homotetramer. FMNH2 serves as cofactor.

It carries out the reaction 5-O-(1-carboxyvinyl)-3-phosphoshikimate = chorismate + phosphate. Its pathway is metabolic intermediate biosynthesis; chorismate biosynthesis; chorismate from D-erythrose 4-phosphate and phosphoenolpyruvate: step 7/7. Catalyzes the anti-1,4-elimination of the C-3 phosphate and the C-6 proR hydrogen from 5-enolpyruvylshikimate-3-phosphate (EPSP) to yield chorismate, which is the branch point compound that serves as the starting substrate for the three terminal pathways of aromatic amino acid biosynthesis. This reaction introduces a second double bond into the aromatic ring system. In Rhodopseudomonas palustris (strain BisA53), this protein is Chorismate synthase.